The primary structure comprises 1896 residues: Obscurin-like protein 1 (1896 aa).

A Phosphoserine modification is found at S10. Positions 12–100 (PCFLRFPRPV…GEAYAAAAVT (89 aa)) constitute an Ig-like 1 domain. An interaction with TTN region spans residues 17–19 (FPR). C33 and C84 are disulfide-bonded. Positions 85 to 94 (RARNAAGEAY) are interaction with TTN. The segment at 106-127 (ASDPELQPAERPLPSPGSGEGA) is disordered. Ig-like domains follow at residues 128 to 225 (PVFL…ALLQ), 243 to 330 (PVVE…QTLS), and 339 to 425 (PRLR…ANVT). Cystine bridges form between C149-C209, C267-C319, and C362-C412. The Fibronectin type-III domain occupies 517 to 615 (PPGPPILAEM…FHGSAHLVPT (99 aa)). Ig-like domains follow at residues 714–800 (PVHI…FGVT), 804–893 (PPVH…VTIT), 902–982 (PSGK…FTVT), 986–1075 (PPVR…VTVT), 1078–1172 (PERI…PPVQ), 1174–1261 (LALE…FTVQ), 1265–1357 (PPVR…VEEP), 1357–1534 (PLLV…ARLS), 1628–1720 (PVTI…RTVA), and 1794–1896 (PAQS…VEGN). 6 disulfide bridges follow: C738/C788, C829/C879, C920/C970, C1011/C1061, C1103/C1153, and C1195/C1245. Disulfide bonds link C1381/C1522 and C1650/C1700.

Component of the 3M complex, composed of core components CUL7, CCDC8 and OBSL1. Interacts with CCDC8. Interacts with CUL7; the interaction is direct. Interacts with FBXW8. Interacts (via N-terminal Ig-like domain) with TTN/titin (via C-terminal Ig-like domain); the interaction is direct. As to expression, widely expressed, with predominant levels found in the heart.

It is found in the cytoplasm. The protein localises to the cytoskeleton. The protein resides in the microtubule organizing center. It localises to the centrosome. Its subcellular location is the perinuclear region. It is found in the golgi apparatus. Its function is as follows. Core component of the 3M complex, a complex required to regulate microtubule dynamics and genome integrity. It is unclear how the 3M complex regulates microtubules, it could act by controlling the level of a microtubule stabilizer. Acts as a regulator of the Cul7-RING(FBXW8) ubiquitin-protein ligase, playing a critical role in the ubiquitin ligase pathway that regulates Golgi morphogenesis and dendrite patterning in brain. Required to localize CUL7 to the Golgi apparatus in neurons. This Homo sapiens (Human) protein is Obscurin-like protein 1.